Consider the following 89-residue polypeptide: OMEGA-ectatommitoxin(02)-Rm1a (89 aa).

Residues 1–30 form the signal peptide; it reads MKDSYISIVIAYLMVTFILVSSMPIEGEKG. 3 disulfides stabilise this stretch: Cys39–Cys52, Cys47–Cys68, and Cys70–Cys79. The EGF-like domain occupies 43–80; the sequence is YANYCFNGKCVHVVAQDEPGKPCYSCICDKFYIGKRCG.

The protein belongs to the EGF domain peptide family. In terms of tissue distribution, expressed by the venom gland.

It is found in the secreted. In terms of biological role, ant peptide with probable defensive activity which acts as a potent agonist of the mammalian epidermal growth factor receptor (EGFR). Mimics, both structurally and functionally, vertebrate epidermal growth factor (EGF) peptide hormones. In vivo, intraplantar injection in mice causes long-lasting (several days) hypersensitivity of the injected paw to both mechanical and thermal stimuli. Its long-lasting effect is unusual for venom toxins whose effects are usually immediate. One possible explanation is that it would reduce the duration of a nest attack, discourage future attacks, or enhance the actions of subsequent exposure to other pain-inducing venom peptides. The polypeptide is OMEGA-ectatommitoxin(02)-Rm1a (Rhytidoponera metallica (Australian green-headed ant)).